The following is a 593-amino-acid chain: NADH-quinone oxidoreductase subunit C/D (593 aa).

An NADH dehydrogenase I subunit C region spans residues 1–184 (MTADNAIFIP…DPYSLTLAKQ (184 aa)). Residues 208–593 (DYMFLNLGPN…IDFVMADVDR (386 aa)) form an NADH dehydrogenase I subunit D region.

This sequence in the N-terminal section; belongs to the complex I 30 kDa subunit family. The protein in the C-terminal section; belongs to the complex I 49 kDa subunit family. As to quaternary structure, NDH-1 is composed of 13 different subunits. Subunits NuoB, CD, E, F, and G constitute the peripheral sector of the complex.

It localises to the cell inner membrane. The catalysed reaction is a quinone + NADH + 5 H(+)(in) = a quinol + NAD(+) + 4 H(+)(out). Its function is as follows. NDH-1 shuttles electrons from NADH, via FMN and iron-sulfur (Fe-S) centers, to quinones in the respiratory chain. The immediate electron acceptor for the enzyme in this species is believed to be ubiquinone. Couples the redox reaction to proton translocation (for every two electrons transferred, four hydrogen ions are translocated across the cytoplasmic membrane), and thus conserves the redox energy in a proton gradient. The sequence is that of NADH-quinone oxidoreductase subunit C/D from Pseudomonas putida (strain W619).